The primary structure comprises 711 residues: Pentatricopeptide repeat-containing protein At5g46580, chloroplastic (711 aa).

A chloroplast-targeting transit peptide spans 1–43 (MATVLTTAIDVCFNPQNSDTKKHSLFLKPSLFRQSRSRKLNIS). PPR repeat units follow at residues 185-219 (ETIF…GVEL), 220-254 (DNIT…GLMP), 255-289 (DEVT…GWKP), 290-324 (DAIA…DVKP), 325-359 (NVVV…GLTP), 360-394 (NEKT…KWPM), 395-425 (DFIL…MKES), 431-465 (DNFS…GVQV), 466-500 (NVMG…GVKP), and 501-535 (DDRL…NKKL). The region spanning 614–696 (LDVRSLSVGA…IFVATKEDLV (83 aa)) is the Smr domain.

The protein belongs to the PPR family. P subfamily.

It is found in the plastid. Its subcellular location is the chloroplast. In Arabidopsis thaliana (Mouse-ear cress), this protein is Pentatricopeptide repeat-containing protein At5g46580, chloroplastic.